The following is a 158-amino-acid chain: 2-C-methyl-D-erythritol 2,4-cyclodiphosphate synthase (158 aa).

Residues Asp9 and His11 each coordinate a divalent metal cation. Residues 9 to 11 (DVH) and 35 to 36 (HS) each bind 4-CDP-2-C-methyl-D-erythritol 2-phosphate. His43 lines the a divalent metal cation pocket. 4-CDP-2-C-methyl-D-erythritol 2-phosphate contacts are provided by residues 57 to 59 (DIG), 62 to 66 (FPDTD), 101 to 107 (AQKPKMA), 133 to 136 (TTTE), Phe140, and Arg143.

Belongs to the IspF family. As to quaternary structure, homotrimer. The cofactor is a divalent metal cation.

It carries out the reaction 4-CDP-2-C-methyl-D-erythritol 2-phosphate = 2-C-methyl-D-erythritol 2,4-cyclic diphosphate + CMP. The protein operates within isoprenoid biosynthesis; isopentenyl diphosphate biosynthesis via DXP pathway; isopentenyl diphosphate from 1-deoxy-D-xylulose 5-phosphate: step 4/6. Involved in the biosynthesis of isopentenyl diphosphate (IPP) and dimethylallyl diphosphate (DMAPP), two major building blocks of isoprenoid compounds. Catalyzes the conversion of 4-diphosphocytidyl-2-C-methyl-D-erythritol 2-phosphate (CDP-ME2P) to 2-C-methyl-D-erythritol 2,4-cyclodiphosphate (ME-CPP) with a corresponding release of cytidine 5-monophosphate (CMP). In Bacillus cereus (strain B4264), this protein is 2-C-methyl-D-erythritol 2,4-cyclodiphosphate synthase.